The primary structure comprises 301 residues: Protoheme IX farnesyltransferase (301 aa).

9 helical membrane-spanning segments follow: residues 20–42 (FTEL…GMWL), 55–75 (VDVI…SGAF), 105–125 (ALMV…MTTW), 126–146 (QAGV…SLYA), 150–172 (LVSN…WFAV), 176–198 (FSIV…FYAI), 227–247 (MFFW…LGIV), 249–269 (VILA…GFKM), and 280–300 (FVYS…ISIF).

This sequence belongs to the UbiA prenyltransferase family. Protoheme IX farnesyltransferase subfamily. In terms of assembly, interacts with CtaA.

It is found in the cell membrane. It catalyses the reaction heme b + (2E,6E)-farnesyl diphosphate + H2O = Fe(II)-heme o + diphosphate. It participates in porphyrin-containing compound metabolism; heme O biosynthesis; heme O from protoheme: step 1/1. Converts heme B (protoheme IX) to heme O by substitution of the vinyl group on carbon 2 of heme B porphyrin ring with a hydroxyethyl farnesyl side group. The protein is Protoheme IX farnesyltransferase of Listeria monocytogenes serovar 1/2a (strain ATCC BAA-679 / EGD-e).